The following is a 585-amino-acid chain: Aspartate--tRNA ligase (585 aa).

Glu169 provides a ligand contact to L-aspartate. The segment at 193-196 (QLFK) is aspartate. Position 215 (Arg215) interacts with L-aspartate. ATP is bound by residues 215 to 217 (RDE) and Gln224. His443 contributes to the L-aspartate binding site. Glu478 is a binding site for ATP. L-aspartate is bound at residue Arg485. 530-533 (GLDR) is an ATP binding site.

The protein belongs to the class-II aminoacyl-tRNA synthetase family. Type 1 subfamily. Homodimer.

The protein localises to the cytoplasm. It catalyses the reaction tRNA(Asp) + L-aspartate + ATP = L-aspartyl-tRNA(Asp) + AMP + diphosphate. Catalyzes the attachment of L-aspartate to tRNA(Asp) in a two-step reaction: L-aspartate is first activated by ATP to form Asp-AMP and then transferred to the acceptor end of tRNA(Asp). The chain is Aspartate--tRNA ligase from Pseudothermotoga lettingae (strain ATCC BAA-301 / DSM 14385 / NBRC 107922 / TMO) (Thermotoga lettingae).